Reading from the N-terminus, the 658-residue chain is Gametogenetin (658 aa).

Disordered stretches follow at residues 1 to 268 (MGNV…ASGG) and 285 to 584 (KQGP…SNKG). The segment covering 14–30 (SRKEQASDRASDSRRTP) has biased composition (basic and acidic residues). Residues 54–83 (PGSSGPPGLLIPPESQASSSTLPLTLELPS) show a composition bias toward low complexity. Positions 127-491 (RGLLEASHRG…APTPPSTLSP (365 aa)) are interaction with GGNBP1. Positions 163–188 (PAPPPTPLEPRKQLPPAPSTCDPQPP) are enriched in pro residues. The span at 194 to 204 (LASSATSPTES) shows a compositional bias: polar residues. The span at 252–264 (SSSGPLAAKASLG) shows a compositional bias: low complexity. Serine 384 is subject to Phosphoserine. Residues 398–409 (PRRPTPALLAPP) are compositionally biased toward low complexity. Residues 423 to 460 (RPVPPSPQQIPPLPPPPPTPPATPPPAPPPTPQPPALP) are compositionally biased toward pro residues. Residues 489–516 (LSPTAAAEQAPAPTPAPVTSQVPATTTA) show a composition bias toward low complexity. Residues 496-658 (EQAPAPTPAP…HYDLQATHST (163 aa)) are interactions with ZNF403/GGNBP2 and OAZ3. Basic residues predominate over residues 527–536 (IRTRRNKGPR).

As to quaternary structure, interacts with FANCL, GGNBP1 and ZNF403/GGNBP2.

In terms of biological role, may be involved in spermatogenesis. This chain is Gametogenetin (Ggn), found in Rattus norvegicus (Rat).